The sequence spans 753 residues: Fatty acid oxidation complex subunit alpha (753 aa).

The enoyl-CoA hydratase stretch occupies residues 8–197 (SVTHPAFTLN…KMGLVDDVVP (190 aa)). The segment at 313 to 747 (RAIHRVGVLG…FYPVDANIDE (435 aa)) is 3-hydroxyacyl-CoA dehydrogenase. The tract at residues 593–622 (SNPTLHSNSTKNSSPTKNGNSPAKRNSFKW) is disordered. Residues 599–614 (SNSTKNSSPTKNGNSP) are compositionally biased toward low complexity.

In the N-terminal section; belongs to the enoyl-CoA hydratase/isomerase family. This sequence in the central section; belongs to the 3-hydroxyacyl-CoA dehydrogenase family. As to quaternary structure, heterotetramer of two alpha chains (FadJ) and two beta chains (FadI).

It is found in the cytoplasm. The enzyme catalyses a (3S)-3-hydroxyacyl-CoA = a (2E)-enoyl-CoA + H2O. It carries out the reaction a 4-saturated-(3S)-3-hydroxyacyl-CoA = a (3E)-enoyl-CoA + H2O. It catalyses the reaction a (3S)-3-hydroxyacyl-CoA + NAD(+) = a 3-oxoacyl-CoA + NADH + H(+). The catalysed reaction is (3S)-3-hydroxybutanoyl-CoA = (3R)-3-hydroxybutanoyl-CoA. It functions in the pathway lipid metabolism; fatty acid beta-oxidation. Functionally, catalyzes the formation of a hydroxyacyl-CoA by addition of water on enoyl-CoA. Also exhibits 3-hydroxyacyl-CoA epimerase and 3-hydroxyacyl-CoA dehydrogenase activities. This is Fatty acid oxidation complex subunit alpha from Yersinia pseudotuberculosis serotype I (strain IP32953).